A 374-amino-acid chain; its full sequence is tRNA-specific 2-thiouridylase MnmA (374 aa).

ATP-binding positions include 17 to 24 (GMSGGVDS) and methionine 43. The tract at residues 103 to 105 (NPD) is interaction with target base in tRNA. Cysteine 108 acts as the Nucleophile in catalysis. Cysteine 108 and cysteine 204 are oxidised to a cystine. Glycine 132 serves as a coordination point for ATP. The tract at residues 154–156 (KDQ) is interaction with tRNA. The active-site Cysteine persulfide intermediate is cysteine 204. The interval 316–317 (RY) is interaction with tRNA.

The protein belongs to the MnmA/TRMU family.

It is found in the cytoplasm. It carries out the reaction S-sulfanyl-L-cysteinyl-[protein] + uridine(34) in tRNA + AH2 + ATP = 2-thiouridine(34) in tRNA + L-cysteinyl-[protein] + A + AMP + diphosphate + H(+). Functionally, catalyzes the 2-thiolation of uridine at the wobble position (U34) of tRNA, leading to the formation of s(2)U34. This is tRNA-specific 2-thiouridylase MnmA from Pseudomonas putida (strain W619).